Here is a 341-residue protein sequence, read N- to C-terminus: Eukaryotic translation initiation factor 3 subunit I (341 aa).

WD repeat units follow at residues 8–47 (GHER…RLGT), 56–95 (GHNG…CLYT), 151–190 (LSGS…EVQA), 194–233 (EHSA…VMKV), 235–274 (TTET…GKFE), and 291–331 (GHFG…RSRP).

Belongs to the eIF-3 subunit I family. As to quaternary structure, component of the eukaryotic translation initiation factor 3 (eIF-3) complex.

The protein resides in the cytoplasm. Component of the eukaryotic translation initiation factor 3 (eIF-3) complex, which is involved in protein synthesis of a specialized repertoire of mRNAs and, together with other initiation factors, stimulates binding of mRNA and methionyl-tRNAi to the 40S ribosome. The eIF-3 complex specifically targets and initiates translation of a subset of mRNAs involved in cell proliferation. This Cryptococcus neoformans var. neoformans serotype D (strain B-3501A) (Filobasidiella neoformans) protein is Eukaryotic translation initiation factor 3 subunit I.